Here is a 350-residue protein sequence, read N- to C-terminus: Thymidine kinase (350 aa).

15–22 (GAHGLGKT) contributes to the ATP binding site. Glu44 functions as the Proton acceptor in the catalytic mechanism. Gln88 serves as a coordination point for substrate. Arg178 serves as a coordination point for ATP. Position 184 (Arg184) interacts with substrate.

The protein belongs to the herpesviridae thymidine kinase family. Homodimer.

The enzyme catalyses thymidine + ATP = dTMP + ADP + H(+). Its function is as follows. Catalyzes the transfer of the gamma-phospho group of ATP to thymidine to generate dTMP in the salvage pathway of pyrimidine synthesis. The dTMP serves as a substrate for DNA polymerase during viral DNA replication. Allows the virus to be reactivated and to grow in non-proliferative cells lacking a high concentration of phosphorylated nucleic acid precursors. The polypeptide is Thymidine kinase (Bos taurus (Bovine)).